Consider the following 462-residue polypeptide: L-seryl-tRNA(Sec) selenium transferase (462 aa).

An N6-(pyridoxal phosphate)lysine modification is found at lysine 292.

It belongs to the SelA family. The cofactor is pyridoxal 5'-phosphate.

Its subcellular location is the cytoplasm. It catalyses the reaction L-seryl-tRNA(Sec) + selenophosphate + H(+) = L-selenocysteinyl-tRNA(Sec) + phosphate. Its pathway is aminoacyl-tRNA biosynthesis; selenocysteinyl-tRNA(Sec) biosynthesis; selenocysteinyl-tRNA(Sec) from L-seryl-tRNA(Sec) (bacterial route): step 1/1. In terms of biological role, converts seryl-tRNA(Sec) to selenocysteinyl-tRNA(Sec) required for selenoprotein biosynthesis. The protein is L-seryl-tRNA(Sec) selenium transferase of Clostridium perfringens (strain ATCC 13124 / DSM 756 / JCM 1290 / NCIMB 6125 / NCTC 8237 / Type A).